Consider the following 119-residue polypeptide: Ribonuclease P protein component (119 aa).

This sequence belongs to the RnpA family. In terms of assembly, consists of a catalytic RNA component (M1 or rnpB) and a protein subunit.

It carries out the reaction Endonucleolytic cleavage of RNA, removing 5'-extranucleotides from tRNA precursor.. Functionally, RNaseP catalyzes the removal of the 5'-leader sequence from pre-tRNA to produce the mature 5'-terminus. It can also cleave other RNA substrates such as 4.5S RNA. The protein component plays an auxiliary but essential role in vivo by binding to the 5'-leader sequence and broadening the substrate specificity of the ribozyme. The sequence is that of Ribonuclease P protein component from Edwardsiella ictaluri (strain 93-146).